A 387-amino-acid polypeptide reads, in one-letter code: Growth-regulating factor 3 (387 aa).

In terms of domain architecture, QLQ spans 53-88 (PFTAAQYEELEQQALIYKYLVAGVPVPADLLLPIRR). 2 short sequence motifs (bipartite nuclear localization signal) span residues 111 to 129 (KKLDPEPGRCRRTDGKKWR) and 147 to 154 (RGRNRSRK). One can recognise a WRC domain in the interval 114-158 (DPEPGRCRRTDGKKWRCSKEAAPDSKYCERHMHRGRNRSRKPVEA). The tract at residues 145–176 (MHRGRNRSRKPVEAQLVAPHSQPPATAPAAAV) is disordered.

Belongs to the GRF family.

It localises to the nucleus. Functionally, transcription activator that plays a regulatory role in gibberellin-induced stem elongation. The chain is Growth-regulating factor 3 (GRF3) from Oryza sativa subsp. japonica (Rice).